Reading from the N-terminus, the 397-residue chain is Tryptophan synthase beta chain (397 aa).

An N6-(pyridoxal phosphate)lysine modification is found at Lys91.

This sequence belongs to the TrpB family. As to quaternary structure, tetramer of two alpha and two beta chains. Pyridoxal 5'-phosphate is required as a cofactor.

It carries out the reaction (1S,2R)-1-C-(indol-3-yl)glycerol 3-phosphate + L-serine = D-glyceraldehyde 3-phosphate + L-tryptophan + H2O. The protein operates within amino-acid biosynthesis; L-tryptophan biosynthesis; L-tryptophan from chorismate: step 5/5. Its function is as follows. The beta subunit is responsible for the synthesis of L-tryptophan from indole and L-serine. This is Tryptophan synthase beta chain from Bacillus anthracis (strain A0248).